Reading from the N-terminus, the 318-residue chain is Small ribosomal subunit biogenesis GTPase RsgA (318 aa).

The segment covering 1–16 has biased composition (basic residues); the sequence is MTRGKPGRAGHDRRHA. The disordered stretch occupies residues 1–21; the sequence is MTRGKPGRAGHDRRHASTGEH. In terms of domain architecture, CP-type G spans 84–249; it reads SDQFKSKQLA…LIDSPGFQEF (166 aa). GTP is bound by residues 133–136 and 187–195; these read NKID and GQSGMGKSS. Cysteine 273, cysteine 278, histidine 280, and cysteine 286 together coordinate Zn(2+).

This sequence belongs to the TRAFAC class YlqF/YawG GTPase family. RsgA subfamily. As to quaternary structure, monomer. Associates with 30S ribosomal subunit, binds 16S rRNA. The cofactor is Zn(2+).

It is found in the cytoplasm. One of several proteins that assist in the late maturation steps of the functional core of the 30S ribosomal subunit. Helps release RbfA from mature subunits. May play a role in the assembly of ribosomal proteins into the subunit. Circularly permuted GTPase that catalyzes slow GTP hydrolysis, GTPase activity is stimulated by the 30S ribosomal subunit. This is Small ribosomal subunit biogenesis GTPase RsgA from Ralstonia nicotianae (strain ATCC BAA-1114 / GMI1000) (Ralstonia solanacearum).